A 952-amino-acid polypeptide reads, in one-letter code: Glycine dehydrogenase (decarboxylating) (952 aa).

Lys-703 carries the N6-(pyridoxal phosphate)lysine modification.

Belongs to the GcvP family. The glycine cleavage system is composed of four proteins: P, T, L and H. Pyridoxal 5'-phosphate serves as cofactor.

The enzyme catalyses N(6)-[(R)-lipoyl]-L-lysyl-[glycine-cleavage complex H protein] + glycine + H(+) = N(6)-[(R)-S(8)-aminomethyldihydrolipoyl]-L-lysyl-[glycine-cleavage complex H protein] + CO2. Functionally, the glycine cleavage system catalyzes the degradation of glycine. The P protein binds the alpha-amino group of glycine through its pyridoxal phosphate cofactor; CO(2) is released and the remaining methylamine moiety is then transferred to the lipoamide cofactor of the H protein. This Mycobacterium leprae (strain Br4923) protein is Glycine dehydrogenase (decarboxylating).